We begin with the raw amino-acid sequence, 369 residues long: Phenylalanine--tRNA ligase alpha subunit (369 aa).

Residue Glu-272 participates in Mg(2+) binding.

Belongs to the class-II aminoacyl-tRNA synthetase family. Phe-tRNA synthetase alpha subunit type 1 subfamily. In terms of assembly, tetramer of two alpha and two beta subunits. Mg(2+) is required as a cofactor.

It localises to the cytoplasm. It catalyses the reaction tRNA(Phe) + L-phenylalanine + ATP = L-phenylalanyl-tRNA(Phe) + AMP + diphosphate + H(+). This chain is Phenylalanine--tRNA ligase alpha subunit, found in Cutibacterium acnes (strain DSM 16379 / KPA171202) (Propionibacterium acnes).